We begin with the raw amino-acid sequence, 277 residues long: NH(3)-dependent NAD(+) synthetase (277 aa).

36 to 43 (GLSGGIDS) provides a ligand contact to ATP. Asp42 contributes to the Mg(2+) binding site. Arg118 contacts deamido-NAD(+). Residue Thr138 coordinates ATP. Glu143 serves as a coordination point for Mg(2+). Lys167 and Ser189 together coordinate ATP.

This sequence belongs to the NAD synthetase family. As to quaternary structure, homodimer.

It carries out the reaction deamido-NAD(+) + NH4(+) + ATP = AMP + diphosphate + NAD(+) + H(+). Its pathway is cofactor biosynthesis; NAD(+) biosynthesis; NAD(+) from deamido-NAD(+) (ammonia route): step 1/1. Its function is as follows. Catalyzes the ATP-dependent amidation of deamido-NAD to form NAD. Uses ammonia as a nitrogen source. The protein is NH(3)-dependent NAD(+) synthetase of Chlorobaculum tepidum (strain ATCC 49652 / DSM 12025 / NBRC 103806 / TLS) (Chlorobium tepidum).